The following is a 689-amino-acid chain: MTDEDYPTDDPAVVTCGLPYPTGDLHIGHLRTYVSGDAFSRALRKLGQETVFVSGTDMHGTPIAVQAIEAGVGPLDLGLERHEQYADTFEEFSVAFDTYGHTDEETNVELTREFVGAWEDNDHVYETEIQVAYDPDADQWLPDRYVEGTCPYCGEHARGDECDEGCQRHLEPGEIEAPVSTITGNSAEYHERAHKFLRLSDFQEYLEGFINRMEGTNNAKNQPREWIEGGLEDFCITRDLDWGIDYPGEGGDDLVLYVWVDAPIEYVAATKQYSERVGTEEFDWASVWKDGDGEIIHVIGRDIIQHHTVFWPSMLAGADYAEPRAVCATGFVNIDGRGLSTSKNRAIWAAEYLDAGFHPDLLRYYLATASGFERDVNFSWAEFAQRVNTELADAVGNFAYRALLFANRNFDGTPQEVSLTDDVETEIAQAMDDYEDALNEYDLRTAGERAVALARFGNEYIQHNEPWNLDSEAAAPVMRDCVQLVKAVAVLLQPFLPEKTETLWAQLGEDGRVSDATIADCLQAPPAEFGEPAELFEKIEDDRVTELDEALAAKIEAASSEDADGEGMADETADDGIELEPLAEDDISFEEFQALDLRVGEVVEAEGIEGADDLARLEVDIGHEVRQIVAGIKQLHDLDALPGTRVVVVANMEPSELFGVESNGMVLAAGEDADLLTTHEDSEPGTKVM.

The short motif at 19-29 is the 'HIGH' region element; sequence PYPTGDLHIGH. Zn(2+)-binding residues include Cys-150, Cys-153, Cys-162, and Cys-166. Positions 338–342 match the 'KMSKS' region motif; sequence GLSTS. Thr-341 is an ATP binding site. Positions 591 to 689 constitute a tRNA-binding domain; it reads EFQALDLRVG…EDSEPGTKVM (99 aa).

This sequence belongs to the class-I aminoacyl-tRNA synthetase family. MetG type 1 subfamily. In terms of assembly, homodimer. The cofactor is Zn(2+).

It localises to the cytoplasm. It carries out the reaction tRNA(Met) + L-methionine + ATP = L-methionyl-tRNA(Met) + AMP + diphosphate. In terms of biological role, is required not only for elongation of protein synthesis but also for the initiation of all mRNA translation through initiator tRNA(fMet) aminoacylation. The chain is Methionine--tRNA ligase from Halobacterium salinarum (strain ATCC 700922 / JCM 11081 / NRC-1) (Halobacterium halobium).